Reading from the N-terminus, the 109-residue chain is Nucleoid-associated protein BCE_0021 (109 aa).

Belongs to the YbaB/EbfC family. In terms of assembly, homodimer.

The protein localises to the cytoplasm. It localises to the nucleoid. Functionally, binds to DNA and alters its conformation. May be involved in regulation of gene expression, nucleoid organization and DNA protection. The chain is Nucleoid-associated protein BCE_0021 from Bacillus cereus (strain ATCC 10987 / NRS 248).